The following is a 154-amino-acid chain: Myoglobin-2 (154 aa).

The Globin domain maps to 2–148 (GLSDGEWQLV…FRKDIATKYK (147 aa)). His65 is a nitrite binding site. His65 serves as a coordination point for O2. His94 lines the heme b pocket.

Belongs to the globin family. Monomeric.

It is found in the cytoplasm. It localises to the sarcoplasm. The enzyme catalyses Fe(III)-heme b-[protein] + nitric oxide + H2O = Fe(II)-heme b-[protein] + nitrite + 2 H(+). It catalyses the reaction H2O2 + AH2 = A + 2 H2O. Functionally, monomeric heme protein which primary function is to store oxygen and facilitate its diffusion within muscle tissues. Reversibly binds oxygen through a pentacoordinated heme iron and enables its timely and efficient release as needed during periods of heightened demand. Depending on the oxidative conditions of tissues and cells, and in addition to its ability to bind oxygen, it also has a nitrite reductase activity whereby it regulates the production of bioactive nitric oxide. Under stress conditions, like hypoxia and anoxia, it also protects cells against reactive oxygen species thanks to its pseudoperoxidase activity. This chain is Myoglobin-2 (MB2), found in Stenella attenuata (Pantropical spotted dolphin).